The following is a 466-amino-acid chain: Trigger factor (466 aa).

One can recognise a PPIase FKBP-type domain in the interval 162-243 (GDVVSIDLSA…VRSVKERELP (82 aa)). A disordered region spans residues 428-466 (GNTIDTSEFFGKRVSAGEAEEAEPADEGAARAASDEATT). Residues 457–466 (ARAASDEATT) are compositionally biased toward low complexity.

Belongs to the FKBP-type PPIase family. Tig subfamily.

Its subcellular location is the cytoplasm. It carries out the reaction [protein]-peptidylproline (omega=180) = [protein]-peptidylproline (omega=0). Functionally, involved in protein export. Acts as a chaperone by maintaining the newly synthesized protein in an open conformation. Functions as a peptidyl-prolyl cis-trans isomerase. This Mycobacterium tuberculosis (strain ATCC 25177 / H37Ra) protein is Trigger factor.